Consider the following 408-residue polypeptide: LIN1-like protein (408 aa).

The disordered stretch occupies residues 1–161 (MKRTLRNPGN…SVPSSPKRMS (161 aa)). The span at 41 to 52 (YYESESEEDEDQ) shows a compositional bias: acidic residues. Composition is skewed to basic and acidic residues over residues 53–62 (ILNKEKKEGQ), 73–109 (DEKRTLPNDEAQKRRDFIENGDAERLAHKGLRNKEVL), and 119–129 (NGKYSKLRYED). The GYF domain maps to 344–402 (SSQYNFKWEFDDKTYGPYTASQIQAWSNEGYFTDAKHAAFIQLANMDEWMYPNNICFCD).

Belongs to the LIN1 family.

This chain is LIN1-like protein, found in Schizosaccharomyces pombe (strain 972 / ATCC 24843) (Fission yeast).